The following is a 299-amino-acid chain: Taste receptor type 2 member 4 (299 aa).

At 1–9 (MLRLFYFSA) the chain is on the extracellular side. Residues 10 to 30 (IIASVILNFVGIIMNLFITVV) traverse the membrane as a helical segment. Topologically, residues 31-46 (NCKTWVKSHRISSSDR) are cytoplasmic. A helical transmembrane segment spans residues 47-67 (ILFSLGITRFLMLGLFLVNTI). The Extracellular portion of the chain corresponds to 68-81 (YFVSSNTERSVYLS). A helical membrane pass occupies residues 82-102 (AFFVLCFMFLDSSSVWFVTLL). Residues 103–131 (NILYCVKITNFQHSVFLLLKRNISPKIPR) are Cytoplasmic-facing. Residues 132 to 152 (LLLACVLISAFTTCLYITLSQ) form a helical membrane-spanning segment. Residues 153-172 (ASPFPELVTTRNNTSFNISE) are Extracellular-facing. N-linked (GlcNAc...) asparagine glycans are attached at residues N164, N165, and N169. The helical transmembrane segment at 173–193 (GILSLVVSLVLSSSLQFIINV) threads the bilayer. The Cytoplasmic segment spans residues 194 to 230 (TSASLLIHSLRRHIQKMQKNATGFWNPQTEAHVGAMK). Residues 231-251 (LMVYFLILYIPYSVATLVQYL) traverse the membrane as a helical segment. The Extracellular portion of the chain corresponds to 252 to 262 (PFYAGMDMGTK). The chain crosses the membrane as a helical span at residues 263–283 (SICLIFATLYSPGHSVLIIIT). Over 284–299 (HPKLKTTAKKILCFKK) the chain is Cytoplasmic.

It belongs to the G-protein coupled receptor T2R family. In terms of tissue distribution, expressed in subsets of taste receptor cells of the tongue and palate epithelium and exclusively in gustducin-positive cells. Expressed on airway ciliated epithelium.

The protein localises to the membrane. It localises to the cell projection. It is found in the cilium membrane. Gustducin-coupled receptor for denatonium and N(6)-propyl-2-thiouracil implicated in the perception of bitter compounds in the oral cavity and the gastrointestinal tract. Signals through PLCB2 and the calcium-regulated cation channel TRPM5. In airway epithelial cells, binding of denatonium increases the intracellular calcium ion concentration and stimulates ciliary beat frequency. The polypeptide is Taste receptor type 2 member 4 (TAS2R4) (Homo sapiens (Human)).